The following is a 357-amino-acid chain: Large ribosomal subunit protein uL10 (357 aa).

Positions 311–357 (MVSRSAEAAERKEKEEEEEEEAEEEEAEEEEEEEEEEAAAGLGALFG) are disordered. Over residues 325-348 (EEEEEEEAEEEEAEEEEEEEEEEA) the composition is skewed to acidic residues.

This sequence belongs to the universal ribosomal protein uL10 family. As to quaternary structure, part of the 50S ribosomal subunit. Forms part of the ribosomal stalk which helps the ribosome interact with GTP-bound translation factors. Forms a heptameric L10(L12)2(L12)2(L12)2 complex, where L10 forms an elongated spine to which the L12 dimers bind in a sequential fashion.

In terms of biological role, forms part of the ribosomal stalk, playing a central role in the interaction of the ribosome with GTP-bound translation factors. This Methanopyrus kandleri (strain AV19 / DSM 6324 / JCM 9639 / NBRC 100938) protein is Large ribosomal subunit protein uL10.